The sequence spans 568 residues: Protein KATNIP homolog (568 aa).

The span at Met1 to Pro20 shows a compositional bias: basic and acidic residues. Positions Met1 to Gln30 are disordered. Positions Ala21–Gln30 are enriched in acidic residues.

Expressed in most ciliated neuronal cells. Not expressed in non-ciliated cells.

Its subcellular location is the cytoplasm. It is found in the cytoskeleton. The protein localises to the cilium axoneme. It localises to the cilium basal body. May regulate ciliary A-tubule number and, along with arl-13, controls cilium integrity. The polypeptide is Protein KATNIP homolog (Caenorhabditis elegans).